The sequence spans 577 residues: Phosphatidylinositol/phosphatidylcholine transfer protein SFH14 (577 aa).

The interval Met1–Arg22 is disordered. Residues Glu136–Asn311 enclose the CRAL-TRIO domain. The interval Glu364–Ser383 is disordered. Residues Glu523–Leu550 adopt a coiled-coil conformation.

Belongs to the SFH family.

The protein resides in the golgi apparatus membrane. Its subcellular location is the cell membrane. Required for transport of secretory proteins from the Golgi complex. Catalyzes the transfer of phosphatidylinositol and phosphatidylcholine between membranes in vitro. In Arabidopsis thaliana (Mouse-ear cress), this protein is Phosphatidylinositol/phosphatidylcholine transfer protein SFH14 (SFH14).